A 701-amino-acid polypeptide reads, in one-letter code: Polyribonucleotide nucleotidyltransferase (701 aa).

The Mg(2+) site is built by aspartate 487 and aspartate 493. The 60-residue stretch at 554–613 (PTMIAMKIDTDKIRDVIGKGGATIRAICEETKASIDIEDDGSIKIFGESKEAAEAARQRV) folds into the KH domain. The S1 motif domain occupies 623 to 691 (GKIYIGKVER…NRGRIKLSIK (69 aa)).

It belongs to the polyribonucleotide nucleotidyltransferase family. In terms of assembly, component of the RNA degradosome, which is a multiprotein complex involved in RNA processing and mRNA degradation. The cofactor is Mg(2+).

It is found in the cytoplasm. The enzyme catalyses RNA(n+1) + phosphate = RNA(n) + a ribonucleoside 5'-diphosphate. Functionally, involved in mRNA degradation. Catalyzes the phosphorolysis of single-stranded polyribonucleotides processively in the 3'- to 5'-direction. This chain is Polyribonucleotide nucleotidyltransferase, found in Pseudomonas syringae pv. syringae (strain B728a).